We begin with the raw amino-acid sequence, 123 residues long: Small ribosomal subunit protein uS13 (123 aa).

Residues 95-123 form a disordered region; that stretch reads GLPVRGQRTKTNARTRKGPARTVAGKKKK.

Belongs to the universal ribosomal protein uS13 family. Part of the 30S ribosomal subunit. Forms a loose heterodimer with protein S19. Forms two bridges to the 50S subunit in the 70S ribosome.

Located at the top of the head of the 30S subunit, it contacts several helices of the 16S rRNA. In the 70S ribosome it contacts the 23S rRNA (bridge B1a) and protein L5 of the 50S subunit (bridge B1b), connecting the 2 subunits; these bridges are implicated in subunit movement. Contacts the tRNAs in the A and P-sites. This chain is Small ribosomal subunit protein uS13, found in Heliobacterium modesticaldum (strain ATCC 51547 / Ice1).